Consider the following 294-residue polypeptide: MLGDLFTKPKKRKYATIPSDGTKADVPEGIMTKCPECKKIMYTKELQKNLMVCNYCGFHHPIGAKVRIDMLVDEGSFEELDANLTTANPLGFENYMDRIEKDKQKSGLNEAIVTGHATIAGNPLVIAVMDSRFRMASMGSVVGEKILRAVEEADKTNKPFVVFTASGGARMQEGMISLMQMAKTSAAFKRFSNHGGLIITVMTHPTTGGVSASFASLGDYNFAEPGALIGFAGRRVIEQTVREELPEDFQTAEFLLKHGQLDDCISRLDLQNKLSFILRIHAKTPETGGESDGE.

One can recognise a CoA carboxyltransferase N-terminal domain in the interval 30 to 294 (IMTKCPECKK…PETGGESDGE (265 aa)). Positions 34, 37, 53, and 56 each coordinate Zn(2+). A C4-type zinc finger spans residues 34–56 (CPECKKIMYTKELQKNLMVCNYC).

It belongs to the AccD/PCCB family. Acetyl-CoA carboxylase is a heterohexamer composed of biotin carboxyl carrier protein (AccB), biotin carboxylase (AccC) and two subunits each of ACCase subunit alpha (AccA) and ACCase subunit beta (AccD). Requires Zn(2+) as cofactor.

The protein resides in the cytoplasm. It carries out the reaction N(6)-carboxybiotinyl-L-lysyl-[protein] + acetyl-CoA = N(6)-biotinyl-L-lysyl-[protein] + malonyl-CoA. Its pathway is lipid metabolism; malonyl-CoA biosynthesis; malonyl-CoA from acetyl-CoA: step 1/1. In terms of biological role, component of the acetyl coenzyme A carboxylase (ACC) complex. Biotin carboxylase (BC) catalyzes the carboxylation of biotin on its carrier protein (BCCP) and then the CO(2) group is transferred by the transcarboxylase to acetyl-CoA to form malonyl-CoA. The polypeptide is Acetyl-coenzyme A carboxylase carboxyl transferase subunit beta (Listeria welshimeri serovar 6b (strain ATCC 35897 / DSM 20650 / CCUG 15529 / CIP 8149 / NCTC 11857 / SLCC 5334 / V8)).